A 195-amino-acid chain; its full sequence is Probable nicotinate-nucleotide adenylyltransferase (195 aa).

It belongs to the NadD family.

The enzyme catalyses nicotinate beta-D-ribonucleotide + ATP + H(+) = deamido-NAD(+) + diphosphate. The protein operates within cofactor biosynthesis; NAD(+) biosynthesis; deamido-NAD(+) from nicotinate D-ribonucleotide: step 1/1. Functionally, catalyzes the reversible adenylation of nicotinate mononucleotide (NaMN) to nicotinic acid adenine dinucleotide (NaAD). The sequence is that of Probable nicotinate-nucleotide adenylyltransferase from Dictyoglomus thermophilum (strain ATCC 35947 / DSM 3960 / H-6-12).